Reading from the N-terminus, the 579-residue chain is Nuclear receptor coactivator 5 (579 aa).

Residue Met1 is modified to N-acetylmethionine. Residues 1–77 form a disordered region; the sequence is MNTAPSRPSP…DIRDHRDSRS (77 aa). Residues 1–158 form a transcription repression region; the sequence is MNTAPSRPSP…RDSFDGRGPP (158 aa). At Thr3 the chain carries Phosphothreonine. Residues Ser9, Ser21, Ser29, Ser34, Ser96, Ser116, Ser126, Ser143, and Ser151 each carry the phosphoserine modification. Residues 11–77 show a composition bias toward basic and acidic residues; sequence TRRDPYSFGD…DIRDHRDSRS (67 aa). Positions 148 to 172 are disordered; sequence YRDSFDGRGPPGPESQSRAKERLKR. Position 274 is a phosphothreonine (Thr274). Positions 345–349 match the LXXLL motif motif; it reads LINLL. Phosphoserine is present on residues Ser378 and Ser381. Disordered stretches follow at residues 378 to 428 and 446 to 529; these read SADS…PTSQ and ANSS…RPVS. 2 stretches are compositionally biased toward low complexity: residues 395 to 420 and 446 to 460; these read SGSSLKSQPSSQPLQSGQVLPSATPT and ANSSSASPSVATGSS. The tract at residues 458–579 is transcription activation; the sequence is GSSQNQNFST…APMGSYQRHY (122 aa). A compositionally biased stretch (polar residues) spans 461–485; it reads QNQNFSTAANSQPQQRPQASGNQPP.

In terms of assembly, binds HTATIP2/TIP30. Interacts with YLPM1. Forms a complex with ILF2, ILF3, YLPM1, KHDRBS1, RBMX and PPP1CA.

It is found in the nucleus. In terms of biological role, nuclear receptor coregulator that can have both coactivator and corepressor functions. Interacts with nuclear receptors for steroids (ESR1 and ESR2) independently of the steroid binding domain (AF-2) of the ESR receptors, and with the orphan nuclear receptor NR1D2. Involved in the coactivation of nuclear steroid receptors (ER) as well as the corepression of MYC in response to 17-beta-estradiol (E2). The protein is Nuclear receptor coactivator 5 (Ncoa5) of Mus musculus (Mouse).